Reading from the N-terminus, the 466-residue chain is MGSSSLLSFSLCLLLLCHLSQAQFGSSQESPFQSPRRSVSSRNECRIERLNALEPTRTVRSEAGVTDYFDEDNEQFRCAGVSTIRRVIEPRGLLLPSMSNAPRLVYIVQGRGIVGLVMPGCPETFQSFQRSEREEGERHRWSRDEHQKVYQFQEGDVLAVPNGFAYWCYNNGENPVVAITVLDTSNDANQLDRSHRQFLLAGRQEQGRQRYGREGSIKENILRGFSTELLAAAFGVNMELARKLQCRDDTRGEIVRAENGLQVLRPSGMEEEEREEGRSINGFEETYCSMKIKQNIGDPRRADVFNPRGGRITTLNSEKLPILRFIQMSAERVVLYRNAMVSPHWNINAHSIMYCTGGRGRVEVADDRGETVFDGELRQGQLLIVPQNFAMLERAGSEGFQLVSIKTSDRAMVSTIVGKTSALRGMPVEVLMNSYRLSRDEARRVKLTRGDEVAIFTPRRESRAEA.

An N-terminal signal peptide occupies residues 1–22; it reads MGSSSLLSFSLCLLLLCHLSQA. 2 disulfides stabilise this stretch: Cys-45–Cys-78 and Cys-121–Cys-288. 2 consecutive Cupin type-1 domains span residues 50–242 and 294–443; these read LNAL…ELAR and QNIG…DEAR.

The protein belongs to the 11S seed storage protein (globulins) family. In terms of assembly, hexamer; each subunit is composed of an acidic and a basic chain derived from a single precursor and linked by a disulfide bond. In terms of tissue distribution, endosperm of the seeds.

Its function is as follows. Seed storage protein. This chain is Cocosin 1, found in Cocos nucifera (Coconut palm).